Here is a 142-residue protein sequence, read N- to C-terminus: MFIGNYQHNIDPKGRLSIPSKLRSLIQDSVVLSRGLDGCLELRTNQEFENYANKFLSQSNNKQQNRNYKRLLFANSLTVEIDSANRILIPANFKKMANLSKEVVIIGMGDHIELWDINAYEQFNEANFDKFNELAESMDDDH.

SpoVT-AbrB domains are found at residues Asn-5–Glu-47 and Ser-76–Ala-119.

It belongs to the MraZ family. Forms oligomers.

The protein resides in the cytoplasm. It is found in the nucleoid. This chain is Transcriptional regulator MraZ, found in Mycoplasmoides gallisepticum (strain R(low / passage 15 / clone 2)) (Mycoplasma gallisepticum).